Reading from the N-terminus, the 291-residue chain is MPVVTMRQLLDSGVHFGHQTRRWNPKMKRFIFTERNGIYIIDLQQSLSYIDRAYEFVKATVAHGGTVLFVGTKKQAQEAIAEQATRVGQPYVNQRWLGGMLTNFQTVAKRIQRMKELEEIDFDDVAGSAYTKKELLLLKRELTKLESNLGGIRNLTKAPSVLWIVDTKKEHLAVDEAKKLNIPVVAILDTNCDPDEVDFPIPGNDDAIRSVNLLTRVVADAVAEGLIARNNRGSGTTEAPEEPLAEWERELLEGSKAEEAAAAAPAENAEAPAAPAAEAPAAAEAPAEDAK.

A disordered region spans residues 231-291 (NRGSGTTEAP…AAEAPAEDAK (61 aa)). Over residues 246 to 259 (EWERELLEGSKAEE) the composition is skewed to basic and acidic residues. Low complexity predominate over residues 260 to 285 (AAAAAPAENAEAPAAPAAEAPAAAEA).

It belongs to the universal ribosomal protein uS2 family.

This is Small ribosomal subunit protein uS2 from Pseudarthrobacter chlorophenolicus (strain ATCC 700700 / DSM 12829 / CIP 107037 / JCM 12360 / KCTC 9906 / NCIMB 13794 / A6) (Arthrobacter chlorophenolicus).